Here is a 241-residue protein sequence, read N- to C-terminus: Sugar fermentation stimulation protein homolog (241 aa).

It belongs to the SfsA family.

The sequence is that of Sugar fermentation stimulation protein homolog from Yersinia enterocolitica serotype O:8 / biotype 1B (strain NCTC 13174 / 8081).